A 310-amino-acid chain; its full sequence is Protein-L-isoaspartate O-methyltransferase (310 aa).

Disordered stretches follow at residues 1-44 (MSGE…DKPA) and 67-88 (AKPATAPKPTAPKPALPKPAAP). Basic and acidic residues predominate over residues 14–29 (EDLKRAPRKSEGRPGE). Positions 32-44 (AAGAVPKAADKPA) are enriched in low complexity. A compositionally biased stretch (pro residues) spans 75-86 (PTAPKPALPKPA). Residue Ser-157 is part of the active site.

This sequence belongs to the methyltransferase superfamily. L-isoaspartyl/D-aspartyl protein methyltransferase family.

The protein localises to the cytoplasm. The catalysed reaction is [protein]-L-isoaspartate + S-adenosyl-L-methionine = [protein]-L-isoaspartate alpha-methyl ester + S-adenosyl-L-homocysteine. Functionally, catalyzes the methyl esterification of L-isoaspartyl residues in peptides and proteins that result from spontaneous decomposition of normal L-aspartyl and L-asparaginyl residues. It plays a role in the repair and/or degradation of damaged proteins. The sequence is that of Protein-L-isoaspartate O-methyltransferase from Burkholderia orbicola (strain MC0-3).